The following is a 471-amino-acid chain: UDP-N-acetylmuramate--L-alanine ligase (471 aa).

114–120 (GTHGKTT) contacts ATP.

The protein belongs to the MurCDEF family.

It localises to the cytoplasm. It carries out the reaction UDP-N-acetyl-alpha-D-muramate + L-alanine + ATP = UDP-N-acetyl-alpha-D-muramoyl-L-alanine + ADP + phosphate + H(+). It participates in cell wall biogenesis; peptidoglycan biosynthesis. Functionally, cell wall formation. The sequence is that of UDP-N-acetylmuramate--L-alanine ligase from Agrobacterium fabrum (strain C58 / ATCC 33970) (Agrobacterium tumefaciens (strain C58)).